Consider the following 1693-residue polypeptide: 1-phosphatidylinositol 4,5-bisphosphate phosphodiesterase eta-1 (1693 aa).

In terms of domain architecture, PH spans 20 to 128; that stretch reads SVMQSGTQMI…WITGLKYLMA (109 aa). 3 consecutive EF-hand domains span residues 142–177, 178–214, and 226–246; these read THDQWVKQTFEEADKNGDGLLNIEEIHQLMHKLNVN, LPRRKVRQMFQEADTDENQGTLTFEEFCVFYKMMSLR, and DKKDHLTVEELAQFLKVEQKM. Residues aspartate 155, asparagine 157, aspartate 159, and glutamate 166 each coordinate Ca(2+). The 146-residue stretch at 299 to 444 folds into the PI-PLC X-box domain; the sequence is QDMDQPLCNY…LKGKILVKGK (146 aa). Histidine 314 is an active-site residue. 3 residues coordinate Ca(2+): asparagine 315, glutamate 344, and aspartate 346. Histidine 358 is an active-site residue. Ca(2+) is bound at residue glutamate 393. 2 residues coordinate substrate: lysine 442 and lysine 444. The segment at 526–585 is disordered; that stretch reads LNAHLKQSPDVKESGKKSHGRSLMTNFGKHKKTTKSRSKSYSTDDEEDTQQSTGKEGGQL. The span at 532-541 shows a compositional bias: basic and acidic residues; that stretch reads QSPDVKESGK. Residues 553–563 are compositionally biased toward basic residues; it reads GKHKKTTKSRS. The 114-residue stretch at 601–714 folds into the PI-PLC Y-box domain; it reads LSDLVVYTNS…GYVLKPQQMC (114 aa). Substrate is bound by residues serine 627 and arginine 654. The C2 domain maps to 715–843; the sequence is KGTFNPFSGD…PGYRHVYLEG (129 aa). Ca(2+)-binding residues include isoleucine 758, aspartate 760, aspartate 784, aspartate 813, histidine 814, and aspartate 815. The span at 992–1005 shows a compositional bias: basic and acidic residues; sequence IEGKENSLAEDKDG. 4 disordered regions span residues 992–1014, 1052–1089, 1300–1329, and 1578–1613; these read IEGKENSLAEDKDGRRKGKASIK, TGEQLGMSSPRGGRTTSNATSNCQENPCPSKSLSPKQH, LESNLPGSPNTSRGWLPKSPTKGEDWETLK, and LSSRSQSRVRNIASRAKEKQEANKQKVPNPSNGAGV. Residues 1065-1086 show a composition bias toward polar residues; sequence RTTSNATSNCQENPCPSKSLSP. The segment covering 1592–1601 has biased composition (basic and acidic residues); it reads RAKEKQEANK.

Ca(2+) serves as cofactor. In terms of tissue distribution, expressed in brain and to a lower extent in lung. In brain, it is found in cerebrum, cerebellum and spinal cord. In embryo expressed in the notochord, developing spinal cord (in a ventral to dorsal gradient), dorsal root ganglia, cerebellum and dermatomyosome.

It localises to the cytoplasm. The protein localises to the membrane. It catalyses the reaction a 1,2-diacyl-sn-glycero-3-phospho-(1D-myo-inositol-4,5-bisphosphate) + H2O = 1D-myo-inositol 1,4,5-trisphosphate + a 1,2-diacyl-sn-glycerol + H(+). Its function is as follows. The production of the second messenger molecules diacylglycerol (DAG) and inositol 1,4,5-trisphosphate (IP3) is mediated by calcium-activated phosphatidylinositol-specific phospholipase C enzymes. The protein is 1-phosphatidylinositol 4,5-bisphosphate phosphodiesterase eta-1 of Homo sapiens (Human).